We begin with the raw amino-acid sequence, 42 residues long: Delta-actinopoditoxin-Mb1a (42 aa).

4 cysteine pairs are disulfide-bonded: cysteine 1–cysteine 15, cysteine 8–cysteine 20, cysteine 14–cysteine 31, and cysteine 16–cysteine 42.

It belongs to the neurotoxin 06 (delta-actx) family. As to expression, expressed by the venom gland.

It is found in the secreted. Neurotoxin that slows the inactivation of vertebrate tetrodotoxin-sensitive voltage-gated sodium channels (Nav) and most likely insect sodium channels presumably by binding to site 3 of the channel. Effects are an increase in resting tension, a muscle fasciculation and a decrease in indirect twitch tension. It fails to affect tetrodotoxin-resistant sodium currents. In vivo, is lethal to both vertebrates and insects. The protein is Delta-actinopoditoxin-Mb1a of Missulena bradleyi (Eastern mouse spider).